Reading from the N-terminus, the 134-residue chain is Putative toxin MJ0605 (134 aa).

This sequence belongs to the UPF0332 family.

Its function is as follows. Putative toxin component of a putative type VII toxin-antitoxin (TA) system. Its cognate antitoxin might be MJ0604. This is Putative toxin MJ0605 from Methanocaldococcus jannaschii (strain ATCC 43067 / DSM 2661 / JAL-1 / JCM 10045 / NBRC 100440) (Methanococcus jannaschii).